A 265-amino-acid chain; its full sequence is Adenosine 5'-phosphosulfate reductase (265 aa).

[4Fe-4S] cluster is bound by residues cysteine 135, cysteine 136, cysteine 218, and cysteine 221. Residue cysteine 246 is the Nucleophile; cysteine thiosulfonate intermediate of the active site.

This sequence belongs to the PAPS reductase family. CysH subfamily. Requires [4Fe-4S] cluster as cofactor.

The protein resides in the cytoplasm. It catalyses the reaction [thioredoxin]-disulfide + sulfite + AMP + 2 H(+) = adenosine 5'-phosphosulfate + [thioredoxin]-dithiol. It functions in the pathway sulfur metabolism; hydrogen sulfide biosynthesis; sulfite from sulfate. Its function is as follows. Catalyzes the formation of sulfite from adenosine 5'-phosphosulfate (APS) using thioredoxin as an electron donor. This is Adenosine 5'-phosphosulfate reductase from Rhizobium meliloti (strain 1021) (Ensifer meliloti).